The following is a 290-amino-acid chain: Agmatinase (290 aa).

The Mn(2+) site is built by histidine 112, aspartate 135, histidine 137, aspartate 139, aspartate 216, and aspartate 218.

Belongs to the arginase family. Agmatinase subfamily. Mn(2+) serves as cofactor.

It carries out the reaction agmatine + H2O = urea + putrescine. It functions in the pathway amine and polyamine biosynthesis; putrescine biosynthesis via agmatine pathway; putrescine from agmatine: step 1/1. Its function is as follows. Catalyzes the formation of putrescine from agmatine. This Bacillus subtilis (strain 168) protein is Agmatinase (speB).